The sequence spans 330 residues: Tryptophan--tRNA ligase (330 aa).

Residues Gln10–Ser12 and Gly18–Asn19 contribute to the ATP site. The short motif at Pro11–Asn19 is the 'HIGH' region element. An L-tryptophan-binding site is contributed by Asp133. ATP contacts are provided by residues Gly145–Asp147, Ile184, and Lys193–Ser197. Positions Lys193–Ser197 match the 'KMSKS' region motif.

The protein belongs to the class-I aminoacyl-tRNA synthetase family. Homodimer.

It is found in the cytoplasm. It carries out the reaction tRNA(Trp) + L-tryptophan + ATP = L-tryptophyl-tRNA(Trp) + AMP + diphosphate + H(+). Functionally, catalyzes the attachment of tryptophan to tRNA(Trp). This chain is Tryptophan--tRNA ligase, found in Halalkalibacterium halodurans (strain ATCC BAA-125 / DSM 18197 / FERM 7344 / JCM 9153 / C-125) (Bacillus halodurans).